A 766-amino-acid polypeptide reads, in one-letter code: MVSNQRVRLFMLCFCLVNNAVIAATEDENVERKPYIVYMGEATENSLVEAAENHHNLLMTVIGDESKARELKIYSYGKNINGFVARLFPHEAEKLSREEGVVSVFKNTQRQLHTTRSWDFLGLVESKYKRSVGIESNIIVGVLDTGIDVESPSFNDKGVGPPPAKWKGKCVTGNNFTRCNNKVIGAKYFHIQSEGLPDGEGDTAADHDGHGTHTSSTIAGVSVSSASLFGIANGTARGGVPSARIAAYKVCWDSGCTDMDMLAAFDEAISDGVDIISISIGGASLPFFEDPIAIGAFHAMKRGILTTCSAGNNGPGLFTVSNLAPWVMTVAANSLDRKFETVVKLGNGLTASGISLNGFNPRKKMYPLTSGSLASNLSAGGYGEPSTCEPGTLGEDKVMGKVVYCEAGREEGGNGGQGQDHVVRSLKGAGVIVQLLEPTDMATSTLIAGSYVFFEDGTKITEYINSTKNPQAVIFKTKTTKMLAPSISSFSARGPQRISPNILKPDISAPGLNILAAYSKLASVTGYPDDNRRTLFSIMSGTSMACPHAAAAAAYVKSFHPDWSPAAIKSALMTTATPMRIKGNEAELSYGSGQINPRRAIHPGLVYDITEDAYLRFLCKEGYNSTSIGLLTGDNSNNTTKKEYNCENIKRGLGSDGLNYPSLHKQVNSTEAKVSEVFYRTVTNVGYGPSTYVARVWAPKGLRVEVVPKVMSFERPKEKRNFKVVIDGVWDETMKGIVSASVEWDDSRGHLVRSPILLFRSDNDYR.

An N-terminal signal peptide occupies residues 1–23; that stretch reads MVSNQRVRLFMLCFCLVNNAVIA. A propeptide spans 24–113 (activation peptide); sequence ATEDENVERK…VFKNTQRQLH (90 aa). The Inhibitor I9 domain occupies 35 to 113; it reads YIVYMGEATE…VFKNTQRQLH (79 aa). In terms of domain architecture, Peptidase S8 spans 117–601; sequence SWDFLGLVES…SGQINPRRAI (485 aa). Catalysis depends on Asp144, which acts as the Charge relay system. N-linked (GlcNAc...) asparagine glycosylation occurs at Asn175. The active-site Charge relay system is His210. Asn233, Asn376, and Asn465 each carry an N-linked (GlcNAc...) asparagine glycan. In terms of domain architecture, PA spans 365 to 460; the sequence is MYPLTSGSLA…YVFFEDGTKI (96 aa). Residue Ser543 is the Charge relay system of the active site. Residues Asn624, Asn638, and Asn668 are each glycosylated (N-linked (GlcNAc...) asparagine).

The protein belongs to the peptidase S8 family. In terms of processing, the C-terminal propeptide is autocleaved.

The protein localises to the secreted. This Arabidopsis thaliana (Mouse-ear cress) protein is Subtilisin-like protease SBT4.15.